The primary structure comprises 228 residues: Ankyrin repeat domain-containing protein 46 (228 aa).

ANK repeat units follow at residues 11–40, 44–74, 77–103, and 107–138; these read QTNVPLLQACIDGDFTYSKRLLESGFDPNI, RGRTGLHLAAARGNVDICQLLHKFGADPLAT, QGNTALHLCGHVDTIQFLVSNGLKIDI, and QGATPLVLAKRRGVNKDVIRLLESLEEQEVKG. The helical transmembrane segment at 195-215 threads the bilayer; that stretch reads VLLLILVIALLSLGIAYYVSG.

The protein localises to the membrane. The sequence is that of Ankyrin repeat domain-containing protein 46 (Ankrd46) from Mus musculus (Mouse).